A 259-amino-acid chain; its full sequence is Protein N-terminal and lysine N-methyltransferase efm7 (259 aa).

S-adenosyl-L-methionine is bound by residues Trp56, 83–85, Asp105, Trp139, and Ala163; that span reads GAA.

This sequence belongs to the class I-like SAM-binding methyltransferase superfamily. EFM7 family.

It localises to the cytoplasm. S-adenosyl-L-methionine-dependent protein methyltransferase that trimethylates the N-terminal glycine 'Gly-2' of elongation factor 1-alpha, before also catalyzing the mono- and dimethylation of 'Lys-3'. This chain is Protein N-terminal and lysine N-methyltransferase efm7, found in Aspergillus fumigatus (strain ATCC MYA-4609 / CBS 101355 / FGSC A1100 / Af293) (Neosartorya fumigata).